The sequence spans 174 residues: Adenylate kinase (174 aa).

Residues 12-41 (STGDMLRAAIKAGTPLGLEAKKIIDEGGLV) form an NMP region. AMP is bound by residues threonine 13, arginine 18, 39–41 (GLV), 67–70 (GFPR), and glutamine 74. The LID stretch occupies residues 104-141 (GRRVHLASGRTYHVTYNPPKVEGKDDVTGEDLIQRDDD). ATP-binding positions include arginine 105 and 114-115 (TY). Residues arginine 138 and arginine 149 each contribute to the AMP site.

Belongs to the adenylate kinase family. In terms of assembly, monomer.

It is found in the cytoplasm. It carries out the reaction AMP + ATP = 2 ADP. Its pathway is purine metabolism; AMP biosynthesis via salvage pathway; AMP from ADP: step 1/1. Catalyzes the reversible transfer of the terminal phosphate group between ATP and AMP. Plays an important role in cellular energy homeostasis and in adenine nucleotide metabolism. The protein is Adenylate kinase of Neisseria flavescens.